The following is a 409-amino-acid chain: Na(+)-translocating NADH-quinone reductase subunit F (409 aa).

Residues Phe-5–Ile-25 form a helical membrane-spanning segment. A 2Fe-2S ferredoxin-type domain is found at Gly-34–Val-128. The [2Fe-2S] cluster site is built by Cys-71, Cys-77, Cys-80, and Cys-112. The region spanning Val-131 to Lys-271 is the FAD-binding FR-type domain.

The protein belongs to the NqrF family. As to quaternary structure, composed of six subunits; NqrA, NqrB, NqrC, NqrD, NqrE and NqrF. Requires [2Fe-2S] cluster as cofactor. FAD serves as cofactor.

It is found in the cell inner membrane. It carries out the reaction a ubiquinone + n Na(+)(in) + NADH + H(+) = a ubiquinol + n Na(+)(out) + NAD(+). In terms of biological role, NQR complex catalyzes the reduction of ubiquinone-1 to ubiquinol by two successive reactions, coupled with the transport of Na(+) ions from the cytoplasm to the periplasm. The first step is catalyzed by NqrF, which accepts electrons from NADH and reduces ubiquinone-1 to ubisemiquinone by a one-electron transfer pathway. The chain is Na(+)-translocating NADH-quinone reductase subunit F from Mannheimia succiniciproducens (strain KCTC 0769BP / MBEL55E).